A 282-amino-acid polypeptide reads, in one-letter code: HMG box-containing protein R545 (282 aa).

Residues 1–282 (MPKKTATKAN…KKEASDEESD (282 aa)) are disordered. Residues 16–29 (DSENDSVVSEEEDN) show a composition bias toward acidic residues. The span at 70–87 (KGKVNAKKAPAKKAPVKK) shows a compositional bias: basic residues. The span at 93–121 (DSDNEEDEASEDGSDDEEDVVSADDSDSD) shows a compositional bias: acidic residues. Over residues 127–153 (KAAKKAPAKKAPAKKAPAKKAPAKKGK) the composition is skewed to basic residues. 2 stretches are compositionally biased toward basic and acidic residues: residues 176–187 (TKKDGDKPKKPL) and 197–214 (RMPELREEEPGKPYKEYM). Positions 183-252 (PKKPLSDYQK…KAPAKGGSKS (70 aa)) form a DNA-binding region, HMG box. Residues 253–273 (TAKKAPAKKAPAKKAPAKKSK) are compositionally biased toward basic residues.

In Acanthamoeba polyphaga mimivirus (APMV), this protein is HMG box-containing protein R545.